Here is a 107-residue protein sequence, read N- to C-terminus: Cytochrome c2 (107 aa).

Cysteine 14, cysteine 17, histidine 18, and methionine 80 together coordinate heme c.

It belongs to the cytochrome c family. Binds 1 heme c group covalently per subunit.

Cytochrome c2 is found mainly in purple, non-sulfur, photosynthetic bacteria where it functions as the electron donor to the oxidized bacteriochlorophyll in the photophosphorylation pathway. However, it may also have a role in the respiratory chain and is found in some non-photosynthetic bacteria. This Rhodoblastus acidophilus (Rhodopseudomonas acidophila) protein is Cytochrome c2.